We begin with the raw amino-acid sequence, 527 residues long: UDP-glucuronosyltransferase 2A1 (527 aa).

Residues 1-20 form the signal peptide; the sequence is MLNNLLLFSLQISLIGTTLG. The Lumenal portion of the chain corresponds to 21–491; it reads GNVLIWPMEG…TWFQYHSLDV (471 aa). N-linked (GlcNAc...) asparagine glycosylation is found at asparagine 49, leucine 313, and asparagine 347. Residues 492–512 traverse the membrane as a helical segment; the sequence is IGFLLVCVTTAIFLVIQCCLF. The Cytoplasmic segment spans residues 513 to 527; sequence SCQKFGKIGKKKKRE.

This sequence belongs to the UDP-glycosyltransferase family. Olfactory epithelium, brain and fetal lung. Not present in liver.

It is found in the membrane. Its subcellular location is the endoplasmic reticulum membrane. It catalyses the reaction glucuronate acceptor + UDP-alpha-D-glucuronate = acceptor beta-D-glucuronoside + UDP + H(+). It carries out the reaction 16beta,17beta-estriol + UDP-alpha-D-glucuronate = 16beta,17beta-estriol 16-O-(beta-D-glucuronate) + UDP + H(+). The catalysed reaction is 16alpha,17alpha-estriol + UDP-alpha-D-glucuronate = 16alpha,17alpha-estriol 16-O-(beta-D-glucuronate) + UDP + H(+). The enzyme catalyses 17alpha-estradiol + UDP-alpha-D-glucuronate = 17alpha-estradiol 17-O-(beta-D-glucuronate) + UDP + H(+). It catalyses the reaction 17alpha-estradiol + UDP-alpha-D-glucuronate = 17alpha-estradiol 3-O-(beta-D-glucuronate) + UDP + H(+). It carries out the reaction 17beta-estradiol + UDP-alpha-D-glucuronate = 17beta-estradiol 3-O-(beta-D-glucuronate) + UDP + H(+). The catalysed reaction is 17beta-estradiol + UDP-alpha-D-glucuronate = 17beta-estradiol 17-O-(beta-D-glucuronate) + UDP + H(+). The enzyme catalyses testosterone + UDP-alpha-D-glucuronate = testosterone 17-O-(beta-D-glucuronate) + UDP + H(+). It catalyses the reaction epitestosterone + UDP-alpha-D-glucuronate = epitestosterone 17-O-(beta-D-glucuronate) + UDP + H(+). It carries out the reaction lithocholate + UDP-alpha-D-glucuronate = lithocholoyl-3-O-(beta-D-glucuronate) + UDP + H(+). The catalysed reaction is lithocholate + UDP-alpha-D-glucuronate = lithocholoyl-24-O-(beta-D-glucuronate) + UDP. The enzyme catalyses deoxycholate + UDP-alpha-D-glucuronate = deoxycholoyl-24-O-(beta-D-glucuronate) + UDP. It catalyses the reaction hyodeoxycholate + UDP-alpha-D-glucuronate = hyodeoxycholoyl-24-O-(beta-D-glucuronate) + UDP. It carries out the reaction hyocholate + UDP-alpha-D-glucuronate = hyocholoyl-24-O-(beta-D-glucuronate) + UDP. UDP-glucuronosyltransferase (UGT) that catalyzes phase II biotransformation reactions in which lipophilic substrates are conjugated with glucuronic acid to increase the metabolite's water solubility, thereby facilitating excretion into either the urine or bile. Essential for the elimination and detoxification of drugs, xenobiotics and endogenous compounds. Catalyzes the glucuronidation of endogenous steroid hormones such as androgens (testosterone and epitestosterone) and estrogens (estradiol and epiestriol). Contributes to bile acid (BA) detoxification by catalyzing the glucuronidation of BA substrates, which are natural detergents for dietary lipids absorption. Shows a high affinity to aliphatic odorants such as citronellol as well as olfactory tissue specificity, and therefore may be involved in olfaction. Shows a potential role in detoxification of toxic waste compounds in the amniotic fluid before birth, and air-born chemical after birth. The protein is UDP-glucuronosyltransferase 2A1 of Homo sapiens (Human).